A 306-amino-acid polypeptide reads, in one-letter code: D-alanine--D-alanine ligase (306 aa).

One can recognise an ATP-grasp domain in the interval 102–300 (KHVAKAAGIP…FGEFLRWMVE (199 aa)). An ATP-binding site is contributed by 128 to 183 (PMKPPYVVKPVREGSSFGVVIVKEDQSHPPQVITSSEWRYGDRVMVERYIAGRELT). The Mg(2+) site is built by D252, E267, and N269.

It belongs to the D-alanine--D-alanine ligase family. Requires Mg(2+) as cofactor. The cofactor is Mn(2+).

The protein localises to the cytoplasm. It carries out the reaction 2 D-alanine + ATP = D-alanyl-D-alanine + ADP + phosphate + H(+). It participates in cell wall biogenesis; peptidoglycan biosynthesis. Functionally, cell wall formation. This chain is D-alanine--D-alanine ligase, found in Sinorhizobium fredii (strain NBRC 101917 / NGR234).